Consider the following 434-residue polypeptide: D-amino acid dehydrogenase (434 aa).

Position 3 to 17 (3 to 17) interacts with FAD; sequence VLVLGSGVIGTTSAW.

This sequence belongs to the DadA oxidoreductase family. FAD serves as cofactor.

It carries out the reaction a D-alpha-amino acid + A + H2O = a 2-oxocarboxylate + AH2 + NH4(+). It participates in amino-acid degradation; D-alanine degradation; NH(3) and pyruvate from D-alanine: step 1/1. Functionally, oxidative deamination of D-amino acids. The sequence is that of D-amino acid dehydrogenase from Stenotrophomonas maltophilia (strain K279a).